Reading from the N-terminus, the 461-residue chain is Interleukin-1 receptor-associated kinase 4 (461 aa).

M1 bears the N-acetylmethionine mark. Residues 20-104 (RKLSDFIDPQ…APASLLLPDA (85 aa)) form the Death domain. Position 34 is an N6-acetyllysine (K34). A Protein kinase domain is found at 187-455 (SVGGNKMGEG…PDIKKVQQLL (269 aa)). Residues 193-201 (MGEGGFGVV) and K214 each bind ATP. Residue D312 is the Proton acceptor of the active site. ATP-binding positions include 314 to 317 (KSAN) and D330. Phosphothreonine is present on residues T343 and T346. Residue S347 is modified to Phosphoserine.

It belongs to the protein kinase superfamily. TKL Ser/Thr protein kinase family. Pelle subfamily. As to quaternary structure, associates with MYD88 and IRAK2 to form a ternary complex called the Myddosome. Once phosphorylated, IRAK4 dissociates from the receptor complex and then associates with the TNF receptor-associated factor 6 (TRAF6), IRAK1, and PELI1; this intermediate complex is required for subsequent NF-kappa-B activation. Direct binding of SMAD6 to PELI1 prevents complex formation and hence negatively regulates IL1R-TLR signaling and eventually NF-kappa-B-mediated gene expression. Interacts with IL1RL1. Interacts (when phosphorylated) with IRAK1. May interact (when phosphorylated) with IRAK3. Mg(2+) is required as a cofactor. Post-translationally, phosphorylated.

The protein localises to the cytoplasm. The enzyme catalyses L-seryl-[protein] + ATP = O-phospho-L-seryl-[protein] + ADP + H(+). The catalysed reaction is L-threonyl-[protein] + ATP = O-phospho-L-threonyl-[protein] + ADP + H(+). In terms of biological role, serine/threonine-protein kinase that plays a critical role in initiating innate immune response against foreign pathogens. Involved in Toll-like receptor (TLR) and IL-1R signaling pathways. Is rapidly recruited by MYD88 to the receptor-signaling complex upon TLR activation to form the Myddosome together with IRAK2. Phosphorylates initially IRAK1, thus stimulating the kinase activity and intensive autophosphorylation of IRAK1. Phosphorylates E3 ubiquitin ligases Pellino proteins (PELI1, PELI2 and PELI3) to promote pellino-mediated polyubiquitination of IRAK1. Then, the ubiquitin-binding domain of IKBKG/NEMO binds to polyubiquitinated IRAK1 bringing together the IRAK1-MAP3K7/TAK1-TRAF6 complex and the NEMO-IKKA-IKKB complex. In turn, MAP3K7/TAK1 activates IKKs (CHUK/IKKA and IKBKB/IKKB) leading to NF-kappa-B nuclear translocation and activation. Alternatively, phosphorylates TIRAP to promote its ubiquitination and subsequent degradation. Phosphorylates NCF1 and regulates NADPH oxidase activation after LPS stimulation suggesting a similar mechanism during microbial infections. The sequence is that of Interleukin-1 receptor-associated kinase 4 (IRAK4) from Bos taurus (Bovine).